Reading from the N-terminus, the 141-residue chain is Transcription antitermination protein NusB (141 aa).

This sequence belongs to the NusB family.

In terms of biological role, involved in transcription antitermination. Required for transcription of ribosomal RNA (rRNA) genes. Binds specifically to the boxA antiterminator sequence of the ribosomal RNA (rrn) operons. In Treponema pallidum (strain Nichols), this protein is Transcription antitermination protein NusB.